The following is a 224-amino-acid chain: Mannose-specific lectin 3 (224 aa).

2 consecutive Bulb-type lectin domains span residues 2–111 (NNVL…PAAA) and 117–222 (RNVL…VWST). Disulfide bonds link Cys-30/Cys-52 and Cys-145/Cys-170.

As to quaternary structure, heterotetramer of 2 domain 1 and 2 domain 2 chains arranged as a dimer of domain 1/domain 2 heterodimers.

In terms of biological role, mannose-specific lectin. Has weak agglutinating activity towards trypsin-treated erythrocytes from rabbit but not from human. In Crocus vernus (Dutch crocus), this protein is Mannose-specific lectin 3.